The primary structure comprises 153 residues: Putative transcription factor YdeB (153 aa).

The protein belongs to the CarD family.

This is Putative transcription factor YdeB (ydeB) from Bacillus subtilis (strain 168).